We begin with the raw amino-acid sequence, 218 residues long: Ribonuclease S-7 (218 aa).

The N-terminal stretch at methionine 1–glycine 22 is a signal peptide. RNA is bound at residue glutamine 32. A disulfide bridge connects residues cysteine 38 and cysteine 43. Residue asparagine 49 is glycosylated (N-linked (GlcNAc...) asparagine). Histidine 53 is a binding site for RNA. Histidine 53 acts as the Proton donor in catalysis. Residue asparagine 59 is glycosylated (N-linked (GlcNAc...) asparagine). Cysteine 67 and cysteine 116 are joined by a disulfide. RNA is bound by residues aspartate 91 to leucine 92, phenylalanine 105, histidine 108 to glutamate 109, and lysine 112 to histidine 113. Residue glutamate 109 is part of the active site. Catalysis depends on histidine 113, which acts as the Proton acceptor. Residue asparagine 162 is glycosylated (N-linked (GlcNAc...) asparagine). Intrachain disulfides connect cysteine 177–cysteine 207 and cysteine 190–cysteine 201.

It belongs to the RNase T2 family.

It localises to the secreted. The protein localises to the extracellular space. The enzyme catalyses a ribonucleotidyl-ribonucleotide-RNA + H2O = a 3'-end 3'-phospho-ribonucleotide-RNA + a 5'-end dephospho-ribonucleoside-RNA + H(+). Its function is as follows. Self-incompatibility (SI) is the inherited ability of a flowering plant to prevent self-fertilization by discriminating between self and non-self pollen during pollination. In many species of the Solanaceae, self-incompatibility is controlled by the single, multiallelic locus S. This stylar glycoprotein is associated with expression of self-incompatibility in potato. The polypeptide is Ribonuclease S-7 (Nicotiana alata (Winged tobacco)).